The primary structure comprises 241 residues: Pyridoxine 5'-phosphate synthase (241 aa).

Asparagine 7 provides a ligand contact to 3-amino-2-oxopropyl phosphate. 9-10 contributes to the 1-deoxy-D-xylulose 5-phosphate binding site; that stretch reads DH. Arginine 18 is a 3-amino-2-oxopropyl phosphate binding site. Histidine 43 serves as the catalytic Proton acceptor. 1-deoxy-D-xylulose 5-phosphate-binding residues include arginine 45 and histidine 50. Glutamate 70 serves as the catalytic Proton acceptor. Threonine 100 serves as a coordination point for 1-deoxy-D-xylulose 5-phosphate. Histidine 191 serves as the catalytic Proton donor. 3-amino-2-oxopropyl phosphate contacts are provided by residues glycine 192 and 213-214; that span reads GH.

It belongs to the PNP synthase family. Homooctamer; tetramer of dimers.

Its subcellular location is the cytoplasm. It catalyses the reaction 3-amino-2-oxopropyl phosphate + 1-deoxy-D-xylulose 5-phosphate = pyridoxine 5'-phosphate + phosphate + 2 H2O + H(+). It participates in cofactor biosynthesis; pyridoxine 5'-phosphate biosynthesis; pyridoxine 5'-phosphate from D-erythrose 4-phosphate: step 5/5. Functionally, catalyzes the complicated ring closure reaction between the two acyclic compounds 1-deoxy-D-xylulose-5-phosphate (DXP) and 3-amino-2-oxopropyl phosphate (1-amino-acetone-3-phosphate or AAP) to form pyridoxine 5'-phosphate (PNP) and inorganic phosphate. The sequence is that of Pyridoxine 5'-phosphate synthase from Nitrosospira multiformis (strain ATCC 25196 / NCIMB 11849 / C 71).